We begin with the raw amino-acid sequence, 94 residues long: Integration host factor subunit beta (94 aa).

It belongs to the bacterial histone-like protein family. In terms of assembly, heterodimer of an alpha and a beta chain.

This protein is one of the two subunits of integration host factor, a specific DNA-binding protein that functions in genetic recombination as well as in transcriptional and translational control. The sequence is that of Integration host factor subunit beta from Serratia proteamaculans (strain 568).